A 155-amino-acid chain; its full sequence is Protein-export protein SecB (155 aa).

It belongs to the SecB family. In terms of assembly, homotetramer, a dimer of dimers. One homotetramer interacts with 1 SecA dimer.

It localises to the cytoplasm. In terms of biological role, one of the proteins required for the normal export of preproteins out of the cell cytoplasm. It is a molecular chaperone that binds to a subset of precursor proteins, maintaining them in a translocation-competent state. It also specifically binds to its receptor SecA. This is Protein-export protein SecB from Shigella sonnei (strain Ss046).